We begin with the raw amino-acid sequence, 333 residues long: S-adenosylmethionine decarboxylase proenzyme (333 aa).

Phenylalanine 7 contacts substrate. Active-site residues include glutamate 8 and glutamate 11. Residue glutamate 67 coordinates substrate. Residue serine 68 is the Schiff-base intermediate with substrate; via pyruvic acid of the active site. The residue at position 68 (serine 68) is a Pyruvic acid (Ser); by autocatalysis. Cysteine 82 functions as the Proton donor; for catalytic activity in the catalytic mechanism. A substrate-binding site is contributed by phenylalanine 223. Residues serine 229 and histidine 243 each act as proton acceptor; for processing activity in the active site. Glutamate 247 contacts substrate. Serine 298 carries the post-translational modification Phosphoserine.

Belongs to the eukaryotic AdoMetDC family. Heterotetramer of two alpha and two beta chains. Pyruvate is required as a cofactor. In terms of processing, is synthesized initially as an inactive proenzyme. Formation of the active enzyme involves a self-maturation process in which the active site pyruvoyl group is generated from an internal serine residue via an autocatalytic post-translational modification. Two non-identical subunits are generated from the proenzyme in this reaction, and the pyruvate is formed at the N-terminus of the alpha chain, which is derived from the carboxyl end of the proenzyme. The post-translation cleavage follows an unusual pathway, termed non-hydrolytic serinolysis, in which the side chain hydroxyl group of the serine supplies its oxygen atom to form the C-terminus of the beta chain, while the remainder of the serine residue undergoes an oxidative deamination to produce ammonia and the pyruvoyl group blocking the N-terminus of the alpha chain.

The enzyme catalyses S-adenosyl-L-methionine + H(+) = S-adenosyl 3-(methylsulfanyl)propylamine + CO2. It functions in the pathway amine and polyamine biosynthesis; S-adenosylmethioninamine biosynthesis; S-adenosylmethioninamine from S-adenosyl-L-methionine: step 1/1. In terms of biological role, essential for biosynthesis of the polyamines spermidine and spermine. Promotes maintenance and self-renewal of embryonic stem cells, by maintaining spermine levels. The sequence is that of S-adenosylmethionine decarboxylase proenzyme (Amd1) from Rattus norvegicus (Rat).